The chain runs to 461 residues: Early growth response factor homolog 1 (461 aa).

3 disordered regions span residues 1 to 25 (MALH…PSLN), 96 to 152 (TLMP…ELTL), and 232 to 308 (DVLH…YSSL). 4 stretches are compositionally biased toward polar residues: residues 96–105 (TLMPAPSSSY), 129–144 (GSNS…GNSK), 249–265 (LGSS…SRPS), and 272–291 (QRTN…SMSP). The span at 299–308 (YSNSASYSSL) shows a compositional bias: low complexity. 3 C2H2-type zinc fingers span residues 374–398 (YKCP…IRIH), 404–426 (FQCR…VRTH), and 432–454 (FSCD…TKVH).

It belongs to the EGR C2H2-type zinc-finger protein family. In terms of tissue distribution, expressed in sheath cells and distal tip cells of the somatic gonad, as well as in the intestine and sperm (at protein level). Expression not observed in oocytes (at protein level).

The protein resides in the nucleus. It localises to the cytoplasm. Its subcellular location is the perinuclear region. Its function is as follows. Sequence-specific DNA-binding transcription factor. Plays a role in oocyte development, acting cell-autonomously in the somatic gonad. Involved in negative regulation of oocyte MAPK activation and inhibits oocyte maturation and ovulation. The sequence is that of Early growth response factor homolog 1 from Caenorhabditis elegans.